We begin with the raw amino-acid sequence, 1087 residues long: Exportin-7 (1087 aa).

Alanine 2 is modified (N-acetylalanine). In terms of domain architecture, Importin N-terminal spans 30–96; sequence AEKALVEFTN…RNYVLNYLAT (67 aa). Serine 570 carries the phosphoserine modification.

The protein belongs to the exportin family. In terms of assembly, binds to nucleoporins. Found in a complex with XPO7, EIF4A1, ARHGAP1, VPS26A, VPS29, VPS35 and SFN. Interacts with ARHGAP1 and SFN. Interacts with Ran and cargo proteins in a GTP-dependent manner. Highly expressed in testis and spleen, moderate in kidney and liver and low in heart, brain, lung and skeletal muscle.

The protein resides in the cytoplasm. Its subcellular location is the nucleus. Functionally, mediates the nuclear export of proteins (cargos) with broad substrate specificity. In the nucleus binds cooperatively to its cargo and to the GTPase Ran in its active GTP-bound form. Docking of this trimeric complex to the nuclear pore complex (NPC) is mediated through binding to nucleoporins. Upon transit of a nuclear export complex into the cytoplasm, disassembling of the complex and hydrolysis of Ran-GTP to Ran-GDP (induced by RANBP1 and RANGAP1, respectively) cause release of the cargo from the export receptor. XPO7 then return to the nuclear compartment and mediate another round of transport. The directionality of nuclear export is thought to be conferred by an asymmetric distribution of the GTP- and GDP-bound forms of Ran between the cytoplasm and nucleus. This Mus musculus (Mouse) protein is Exportin-7 (Xpo7).